The primary structure comprises 456 residues: Bifunctional protein GlmU (456 aa).

Residues Met-1–Arg-230 are pyrophosphorylase. UDP-N-acetyl-alpha-D-glucosamine-binding positions include Leu-9–Gly-12, Lys-23, Gln-73, and Gly-78–Thr-79. Asp-103 contacts Mg(2+). The UDP-N-acetyl-alpha-D-glucosamine site is built by Gly-140, Glu-155, Asn-170, and Asn-228. Asn-228 contributes to the Mg(2+) binding site. Residues Val-231–Asn-251 form a linker region. The segment at Gly-252–Lys-456 is N-acetyltransferase. Residues Arg-333 and Lys-351 each contribute to the UDP-N-acetyl-alpha-D-glucosamine site. Catalysis depends on His-363, which acts as the Proton acceptor. UDP-N-acetyl-alpha-D-glucosamine-binding residues include Tyr-366 and Asn-377. Acetyl-CoA contacts are provided by residues Asn-386 to Tyr-387, Ala-423, and Arg-440.

The protein in the N-terminal section; belongs to the N-acetylglucosamine-1-phosphate uridyltransferase family. It in the C-terminal section; belongs to the transferase hexapeptide repeat family. Homotrimer. Mg(2+) is required as a cofactor.

It is found in the cytoplasm. The catalysed reaction is alpha-D-glucosamine 1-phosphate + acetyl-CoA = N-acetyl-alpha-D-glucosamine 1-phosphate + CoA + H(+). It catalyses the reaction N-acetyl-alpha-D-glucosamine 1-phosphate + UTP + H(+) = UDP-N-acetyl-alpha-D-glucosamine + diphosphate. It participates in nucleotide-sugar biosynthesis; UDP-N-acetyl-alpha-D-glucosamine biosynthesis; N-acetyl-alpha-D-glucosamine 1-phosphate from alpha-D-glucosamine 6-phosphate (route II): step 2/2. Its pathway is nucleotide-sugar biosynthesis; UDP-N-acetyl-alpha-D-glucosamine biosynthesis; UDP-N-acetyl-alpha-D-glucosamine from N-acetyl-alpha-D-glucosamine 1-phosphate: step 1/1. The protein operates within bacterial outer membrane biogenesis; LPS lipid A biosynthesis. Catalyzes the last two sequential reactions in the de novo biosynthetic pathway for UDP-N-acetylglucosamine (UDP-GlcNAc). The C-terminal domain catalyzes the transfer of acetyl group from acetyl coenzyme A to glucosamine-1-phosphate (GlcN-1-P) to produce N-acetylglucosamine-1-phosphate (GlcNAc-1-P), which is converted into UDP-GlcNAc by the transfer of uridine 5-monophosphate (from uridine 5-triphosphate), a reaction catalyzed by the N-terminal domain. In Bacillus licheniformis (strain ATCC 14580 / DSM 13 / JCM 2505 / CCUG 7422 / NBRC 12200 / NCIMB 9375 / NCTC 10341 / NRRL NRS-1264 / Gibson 46), this protein is Bifunctional protein GlmU.